Here is a 685-residue protein sequence, read N- to C-terminus: tRNA 5-methylaminomethyl-2-thiouridine biosynthesis bifunctional protein MnmC (685 aa).

Residues 1–272 (MTAEPNKPCQ…MAAILSSATQ (272 aa)) are tRNA (mnm(5)s(2)U34)-methyltransferase. The segment at 278–685 (IGGGLASAHL…LRKLLKGKAL (408 aa)) is FAD-dependent cmnm(5)s(2)U34 oxidoreductase.

In the N-terminal section; belongs to the methyltransferase superfamily. tRNA (mnm(5)s(2)U34)-methyltransferase family. This sequence in the C-terminal section; belongs to the DAO family. The cofactor is FAD.

It localises to the cytoplasm. It catalyses the reaction 5-aminomethyl-2-thiouridine(34) in tRNA + S-adenosyl-L-methionine = 5-methylaminomethyl-2-thiouridine(34) in tRNA + S-adenosyl-L-homocysteine + H(+). Catalyzes the last two steps in the biosynthesis of 5-methylaminomethyl-2-thiouridine (mnm(5)s(2)U) at the wobble position (U34) in tRNA. Catalyzes the FAD-dependent demodification of cmnm(5)s(2)U34 to nm(5)s(2)U34, followed by the transfer of a methyl group from S-adenosyl-L-methionine to nm(5)s(2)U34, to form mnm(5)s(2)U34. The chain is tRNA 5-methylaminomethyl-2-thiouridine biosynthesis bifunctional protein MnmC from Shewanella baltica (strain OS185).